Reading from the N-terminus, the 148-residue chain is Cystatin-C (148 aa).

The signal sequence occupies residues 1 to 28 (MARSLGVPLLLLAALVVALALAVSPAAG). The short motif at 83 to 87 (QIVSG) is the Secondary area of contact element. Intrachain disulfides connect Cys-101-Cys-111 and Cys-125-Cys-145.

The protein belongs to the cystatin family.

The protein localises to the secreted. This is a thiol proteinase inhibitor. This Oryctolagus cuniculus (Rabbit) protein is Cystatin-C (CST3).